We begin with the raw amino-acid sequence, 346 residues long: Biotin synthase (346 aa).

Residues 38 to 256 (QQVQVSTLLS…IAVARIMMPT (219 aa)) enclose the Radical SAM core domain. [4Fe-4S] cluster is bound by residues Cys-53, Cys-57, and Cys-60. Positions 97, 128, 188, and 260 each coordinate [2Fe-2S] cluster.

It belongs to the radical SAM superfamily. Biotin synthase family. As to quaternary structure, homodimer. Requires [4Fe-4S] cluster as cofactor. [2Fe-2S] cluster serves as cofactor.

It catalyses the reaction (4R,5S)-dethiobiotin + (sulfur carrier)-SH + 2 reduced [2Fe-2S]-[ferredoxin] + 2 S-adenosyl-L-methionine = (sulfur carrier)-H + biotin + 2 5'-deoxyadenosine + 2 L-methionine + 2 oxidized [2Fe-2S]-[ferredoxin]. It participates in cofactor biosynthesis; biotin biosynthesis; biotin from 7,8-diaminononanoate: step 2/2. Its function is as follows. Catalyzes the conversion of dethiobiotin (DTB) to biotin by the insertion of a sulfur atom into dethiobiotin via a radical-based mechanism. The chain is Biotin synthase from Salmonella newport (strain SL254).